The primary structure comprises 373 residues: Probable ethanolamine permease EutH (373 aa).

The next 10 membrane-spanning stretches (helical) occupy residues 5–25 (EIII…KIIG), 38–58 (IMAM…APVL), 61–81 (ILSP…AMFA), 111–131 (ILGS…LGII), 143–163 (VLSG…VAGF), 166–186 (IMIF…MLGL), 197–217 (FTIF…AGAI), 236–256 (IEIV…VFVI), 307–327 (VAFA…TAGV), and 331–351 (MIFP…AVGI).

Belongs to the EutH family.

Its subcellular location is the cell membrane. The enzyme catalyses ethanolamine(in) = ethanolamine(out). In terms of biological role, probably involved in the diffusion of protonated ethanolamine (EA) into the cell at low pH. At low pH most EA is protonated, and this permease becomes necessary. Contributes to bacterial survival and replication in acidic macrophage vacuoles, but not to bacterial uptake by macrophages. The protein is Probable ethanolamine permease EutH of Listeria monocytogenes serotype 1/2a (strain 10403S).